We begin with the raw amino-acid sequence, 449 residues long: GTPase Der (449 aa).

EngA-type G domains follow at residues 4–169 and 177–353; these read PIVA…PAGE and IQVA…EQHR. Residues 10–17, 57–61, 120–123, 183–190, 230–234, and 295–298 contribute to the GTP site; these read GRPNVGKS, DTGGL, NKCE, DTAGI, and NKWD. Residues 354-439 form the KH-like domain; the sequence is RRVTTAVVND…PIRLLWRSKK (86 aa).

This sequence belongs to the TRAFAC class TrmE-Era-EngA-EngB-Septin-like GTPase superfamily. EngA (Der) GTPase family. Associates with the 50S ribosomal subunit.

Functionally, GTPase that plays an essential role in the late steps of ribosome biogenesis. This is GTPase Der from Thermosynechococcus vestitus (strain NIES-2133 / IAM M-273 / BP-1).